Consider the following 449-residue polypeptide: Putative tartrate transporter (449 aa).

Transmembrane regions (helical) follow at residues 34–54 (IVPF…NIGF), 64–84 (GFSS…YFLF), 99–119 (IWIA…AFVQ), 130–150 (LLGV…SFWF), 156–176 (AAVT…GSPI), 194–214 (WMFL…LFFL), 259–279 (VIAL…LGIW), 292–312 (IEVG…MVLW), 336–356 (GLAF…LTIV), 367–387 (LWSM…IATI), and 414–434 (GGLY…LILA).

Belongs to the major facilitator superfamily. Phthalate permease family.

It is found in the cell membrane. Its function is as follows. Component of the tartrate utilization system and may allow entry of tartrate and tartrate dehydrogenase. This is Putative tartrate transporter (ttuB) from Agrobacterium vitis (Rhizobium vitis).